Here is a 490-residue protein sequence, read N- to C-terminus: UDP-glucosyl transferase 73M2 (490 aa).

Catalysis depends on histidine 20, which acts as the Proton acceptor. Aspartate 124 serves as the catalytic Charge relay. 8 residues coordinate UDP: serine 297, tryptophan 353, alanine 354, histidine 371, asparagine 375, serine 376, glutamate 379, and tyrosine 393.

The protein belongs to the UDP-glycosyltransferase family. Mainly expressed in flowers, flower buds and young leaves, and, to a lesser extent, in old leaves, stems and roots.

It functions in the pathway secondary metabolite biosynthesis; terpenoid biosynthesis. Functionally, component of the oleanane-type triterpene saponins (e.g. saponarioside A and saponarioside B) biosynthetic pathway, leading to the production of natural products with detergent properties used as traditional sources of soap. A glycosyltransferase that mediates the conversion of QA-triFRX to QA-triFRXX via the elongation of the C-28 sugar chain with a D-xylose. The sequence is that of UDP-glucosyl transferase 73M2 from Saponaria officinalis (Common soapwort).